The primary structure comprises 202 residues: Recombination protein RecR (202 aa).

The C4-type zinc finger occupies 61–76 (CARCNSFTEDDVCVIC). The region spanning 84-179 (SLLCIVETPA…KVTRLARGVP (96 aa)) is the Toprim domain.

The protein belongs to the RecR family.

Functionally, may play a role in DNA repair. It seems to be involved in an RecBC-independent recombinational process of DNA repair. It may act with RecF and RecO. This is Recombination protein RecR from Bordetella avium (strain 197N).